A 295-amino-acid polypeptide reads, in one-letter code: Pyridoxal 5'-phosphate synthase subunit PdxS (295 aa).

Aspartate 25 lines the D-ribose 5-phosphate pocket. Lysine 82 acts as the Schiff-base intermediate with D-ribose 5-phosphate in catalysis. Residue glycine 154 participates in D-ribose 5-phosphate binding. Position 166 (arginine 166) interacts with D-glyceraldehyde 3-phosphate. D-ribose 5-phosphate contacts are provided by residues glycine 215 and 236–237 (GS).

Belongs to the PdxS/SNZ family. In the presence of PdxT, forms a dodecamer of heterodimers.

It carries out the reaction aldehydo-D-ribose 5-phosphate + D-glyceraldehyde 3-phosphate + L-glutamine = pyridoxal 5'-phosphate + L-glutamate + phosphate + 3 H2O + H(+). It functions in the pathway cofactor biosynthesis; pyridoxal 5'-phosphate biosynthesis. Its function is as follows. Catalyzes the formation of pyridoxal 5'-phosphate from ribose 5-phosphate (RBP), glyceraldehyde 3-phosphate (G3P) and ammonia. The ammonia is provided by the PdxT subunit. Can also use ribulose 5-phosphate and dihydroxyacetone phosphate as substrates, resulting from enzyme-catalyzed isomerization of RBP and G3P, respectively. This chain is Pyridoxal 5'-phosphate synthase subunit PdxS, found in Pasteurella multocida (strain Pm70).